The primary structure comprises 73 residues: Translation initiation factor IF-1 (73 aa).

In terms of domain architecture, S1-like spans 1 to 73; sequence MSEKEAGIEV…TRGRITYRDK (73 aa).

This sequence belongs to the IF-1 family. As to quaternary structure, component of the 30S ribosomal translation pre-initiation complex which assembles on the 30S ribosome in the order IF-2 and IF-3, IF-1 and N-formylmethionyl-tRNA(fMet); mRNA recruitment can occur at any time during PIC assembly.

The protein localises to the cytoplasm. One of the essential components for the initiation of protein synthesis. Stabilizes the binding of IF-2 and IF-3 on the 30S subunit to which N-formylmethionyl-tRNA(fMet) subsequently binds. Helps modulate mRNA selection, yielding the 30S pre-initiation complex (PIC). Upon addition of the 50S ribosomal subunit IF-1, IF-2 and IF-3 are released leaving the mature 70S translation initiation complex. The sequence is that of Translation initiation factor IF-1 from Anaeromyxobacter sp. (strain Fw109-5).